The following is a 96-amino-acid chain: Non-specific lipid-transfer protein 2 (96 aa).

The N-terminal stretch at 1–27 is a signal peptide; the sequence is MMRRLAVLVLAVAMVAACGGGVVGVAG. 4 disulfide bridges follow: Cys30/Cys62, Cys38/Cys52, Cys53/Cys88, and Cys64/Cys95.

Belongs to the plant LTP family. B11E subfamily.

In terms of biological role, transfer lipids across membranes. May play a role in plant defense or in the biosynthesis of cuticle layers. This chain is Non-specific lipid-transfer protein 2 (LTP-2), found in Oryza sativa subsp. indica (Rice).